A 492-amino-acid chain; its full sequence is KRAB-A domain-containing protein 2 (492 aa).

The KRAB domain occupies 36–117 (LFQEATAFEN…MREKFLMSVT (82 aa)). Position 115 is a phosphoserine (Ser-115). Thr-117 carries the post-translational modification Phosphothreonine. One can recognise an Integrase catalytic domain in the interval 247–415 (RGLAPKPMTF…SPFEAMFGYK (169 aa)). The stretch at 427–457 (RETVATLQTEEELEIAEEQLENSLWIRQEER) forms a coiled coil. Over residues 455–465 (EERAEIGADRS) the composition is skewed to basic and acidic residues. Positions 455-492 (EERAEIGADRSDMDDDMDPTPEASEPSTSQGTSGLLCW) are disordered. Residues 479–492 (EPSTSQGTSGLLCW) show a composition bias toward polar residues.

The sequence is that of KRAB-A domain-containing protein 2 (KRBA2) from Homo sapiens (Human).